We begin with the raw amino-acid sequence, 192 residues long: Ras-like GTP-binding protein O-RHO (192 aa).

G12–T19 provides a ligand contact to GTP. An Effector region motif is present at residues Y34–Y42. GTP is bound by residues D59–Q63 and N117–T120. C189 is subject to Cysteine methyl ester. A lipid anchor (S-geranylgeranyl cysteine) is attached at C189. A propeptide spans L190–L192 (removed in mature form).

Belongs to the small GTPase superfamily. Rho family.

The protein resides in the cell membrane. The polypeptide is Ras-like GTP-binding protein O-RHO (Diplobatis ommata (Ocellated electric ray)).